The following is an 83-amino-acid chain: Large ribosomal subunit protein bL27 (83 aa).

The segment at 1 to 25 (MAHKKGQGASRNGRDSESKRLGLKV) is disordered.

This sequence belongs to the bacterial ribosomal protein bL27 family.

The protein is Large ribosomal subunit protein bL27 of Chlamydia muridarum (strain MoPn / Nigg).